The sequence spans 493 residues: E3 ubiquitin-protein ligase TRIM35 (493 aa).

Met1 is modified (N-acetylmethionine). Ser4 and Ser8 each carry phosphoserine. The RING-type zinc finger occupies 21–61 (CAVCYDPFRDAVTLRCGHNFCRGCVSRCWEVQVSPTCPVCK). A B box-type zinc finger spans residues 96-137 (RFSRVCRLHRGQLSLFCLEDKELLCCSCQADPRHQGHRVQPV). Zn(2+) contacts are provided by Cys101, His104, Cys123, and His129. A coiled-coil region spans residues 210–251 (AEETRQKQLLADEKMKQLTEETEVLAHEIERLQMEMKEDDVS). The B30.2/SPRY domain occupies 284-487 (LGSLQYRVWK…LRICPLHISV (204 aa)).

Belongs to the TRIM/RBCC family. Interacts with PKM isoform M2, but not isoform M1; this interaction may compete with that between PKM and FGFR1, and hence reduces FGFR1-dependent tyrosine phosphorylation of PKM. Interacts with IRF7; this interaction promotes IRF7 proteasomal degradation. Interacts with TRAF3; this interaction promotes TRAF3 activation.

Its subcellular location is the cytoplasm. It is found in the nucleus. The catalysed reaction is S-ubiquitinyl-[E2 ubiquitin-conjugating enzyme]-L-cysteine + [acceptor protein]-L-lysine = [E2 ubiquitin-conjugating enzyme]-L-cysteine + N(6)-ubiquitinyl-[acceptor protein]-L-lysine.. It functions in the pathway protein modification; protein ubiquitination. Its function is as follows. E3 ubiquitin-protein ligase that participates in multiple biological processes including cell death, glucose metabolism, and in particular, the innate immune response. Mediates 'Lys-63'-linked polyubiquitination of TRAF3 thereby promoting type I interferon production via RIG-I signaling pathway. Can also catalyze 'Lys-48'-linked polyubiquitination and proteasomal degradation of viral proteins such as influenza virus PB2. Acts as a negative feedback regulator of TLR7- and TLR9-triggered signaling. Mechanistically, promotes the 'Lys-48'-linked ubiquitination of IRF7 and induces its degradation via a proteasome-dependent pathway. Reduces FGFR1-dependent tyrosine phosphorylation of PKM, inhibiting PKM-dependent lactate production, glucose metabolism, and cell growth. This Homo sapiens (Human) protein is E3 ubiquitin-protein ligase TRIM35 (TRIM35).